Reading from the N-terminus, the 274-residue chain is MTLQEEIIRQLGVKASIDPQEEIRKAVDFLKAYLRKHSFLKTYVLGISGGQDSTLAGKLAQMAIAELREEASDQAYQFIAVRLPYGVQADEADAQKALAFIAPDQTLTINIKAAVDGQVEALQAAGVEISDFNKGNIKARQRMISQYAIAGQMAGAVIGTDHAAENITGFFTKFGDGGADILPLFRLNKRQGKALLKVLGADAALYEKVPTADLEDQKPGLADEVALGVTYQDIDDYLEGKLISKVAQATIEKWWHKGQHKRHLPITIFDDFWK.

Residue 46 to 53 (GISGGQDS) participates in ATP binding. Position 52 (D52) interacts with Mg(2+). R140 is a binding site for deamido-NAD(+). T160 provides a ligand contact to ATP. E165 serves as a coordination point for Mg(2+). Deamido-NAD(+)-binding residues include K173 and D180. K189 and T211 together coordinate ATP. 260 to 261 (HK) provides a ligand contact to deamido-NAD(+).

The protein belongs to the NAD synthetase family. Homodimer.

The enzyme catalyses deamido-NAD(+) + NH4(+) + ATP = AMP + diphosphate + NAD(+) + H(+). The protein operates within cofactor biosynthesis; NAD(+) biosynthesis; NAD(+) from deamido-NAD(+) (ammonia route): step 1/1. Catalyzes the ATP-dependent amidation of deamido-NAD to form NAD. Uses ammonia as a nitrogen source. The sequence is that of NH(3)-dependent NAD(+) synthetase from Streptococcus pyogenes serotype M1.